Here is a 154-residue protein sequence, read N- to C-terminus: Xanthine-guanine phosphoribosyltransferase (154 aa).

Residues 37–38 (RG) and 90–98 (DDLVDTGNT) each bind 5-phospho-alpha-D-ribose 1-diphosphate. Aspartate 91 contributes to the Mg(2+) binding site. Guanine is bound by residues aspartate 94 and isoleucine 137. Xanthine-binding residues include aspartate 94 and isoleucine 137. GMP is bound by residues 94–98 (DTGNT) and 136–137 (WI).

Belongs to the purine/pyrimidine phosphoribosyltransferase family. XGPT subfamily. In terms of assembly, homotetramer. Requires Mg(2+) as cofactor.

Its subcellular location is the cell inner membrane. It catalyses the reaction GMP + diphosphate = guanine + 5-phospho-alpha-D-ribose 1-diphosphate. The enzyme catalyses XMP + diphosphate = xanthine + 5-phospho-alpha-D-ribose 1-diphosphate. The catalysed reaction is IMP + diphosphate = hypoxanthine + 5-phospho-alpha-D-ribose 1-diphosphate. The protein operates within purine metabolism; GMP biosynthesis via salvage pathway; GMP from guanine: step 1/1. Its pathway is purine metabolism; XMP biosynthesis via salvage pathway; XMP from xanthine: step 1/1. Functionally, purine salvage pathway enzyme that catalyzes the transfer of the ribosyl-5-phosphate group from 5-phospho-alpha-D-ribose 1-diphosphate (PRPP) to the N9 position of the 6-oxopurines guanine and xanthine to form the corresponding ribonucleotides GMP (guanosine 5'-monophosphate) and XMP (xanthosine 5'-monophosphate), with the release of PPi. To a lesser extent, also acts on hypoxanthine. The sequence is that of Xanthine-guanine phosphoribosyltransferase from Histophilus somni (strain 129Pt) (Haemophilus somnus).